Reading from the N-terminus, the 210-residue chain is Molybdenum cofactor guanylyltransferase (210 aa).

GTP contacts are provided by residues 14 to 16 (LAG), Lys-27, Asn-55, Asp-73, and Asp-108. Mg(2+) is bound at residue Asp-108.

Belongs to the MobA family. As to quaternary structure, monomer. It depends on Mg(2+) as a cofactor.

Its subcellular location is the cytoplasm. The catalysed reaction is Mo-molybdopterin + GTP + H(+) = Mo-molybdopterin guanine dinucleotide + diphosphate. Functionally, transfers a GMP moiety from GTP to Mo-molybdopterin (Mo-MPT) cofactor (Moco or molybdenum cofactor) to form Mo-molybdopterin guanine dinucleotide (Mo-MGD) cofactor. The sequence is that of Molybdenum cofactor guanylyltransferase from Rhodopseudomonas palustris (strain BisB5).